A 120-amino-acid polypeptide reads, in one-letter code: MKILFVLISILYAVYRFSSEEDVDSAYLANELEPVEDINSEQYAALEPKEEQERSCAGMGQDCKDDCDCCLNIATCNCWFGRYFCSCTFGDYQTCLRKKGKCKRNRPQSCPRSNLNRKKG.

A signal peptide spans Met1–Ser19. A propeptide spanning residues Glu20–Arg54 is cleaved from the precursor. Disulfide bonds link Cys56–Cys70, Cys63–Cys76, Cys69–Cys87, and Cys78–Cys85. Residues Cys56 to Cys95 enclose the Agouti domain.

The protein belongs to the neurotoxin 05 (agouti) family. Post-translationally, contains 6 disulfide bonds. As to expression, expressed by the venom gland.

It is found in the secreted. The protein is U13-lycotoxin-Ls1f of Lycosa singoriensis (Wolf spider).